Reading from the N-terminus, the 268-residue chain is tRNA pseudouridine synthase A (268 aa).

The active-site Nucleophile is the D52. Residue Y110 coordinates substrate.

Belongs to the tRNA pseudouridine synthase TruA family. Homodimer.

It carries out the reaction uridine(38/39/40) in tRNA = pseudouridine(38/39/40) in tRNA. Formation of pseudouridine at positions 38, 39 and 40 in the anticodon stem and loop of transfer RNAs. The sequence is that of tRNA pseudouridine synthase A from Prochlorococcus marinus subsp. pastoris (strain CCMP1986 / NIES-2087 / MED4).